The chain runs to 199 residues: Shikimate kinase (199 aa).

34 to 39 lines the ATP pocket; that stretch reads GAGKTA. Residue T38 participates in Mg(2+) binding. Residues D56, R80, and G102 each coordinate substrate. Position 140 (R140) interacts with ATP. Residue R159 participates in substrate binding.

It belongs to the shikimate kinase family. Monomer. The cofactor is Mg(2+).

It is found in the cytoplasm. The catalysed reaction is shikimate + ATP = 3-phosphoshikimate + ADP + H(+). It participates in metabolic intermediate biosynthesis; chorismate biosynthesis; chorismate from D-erythrose 4-phosphate and phosphoenolpyruvate: step 5/7. Functionally, catalyzes the specific phosphorylation of the 3-hydroxyl group of shikimic acid using ATP as a cosubstrate. This Cereibacter sphaeroides (strain ATCC 17023 / DSM 158 / JCM 6121 / CCUG 31486 / LMG 2827 / NBRC 12203 / NCIMB 8253 / ATH 2.4.1.) (Rhodobacter sphaeroides) protein is Shikimate kinase.